A 579-amino-acid polypeptide reads, in one-letter code: Phosphatidylinositol/phosphatidylcholine transfer protein SFH9 (579 aa).

The region spanning 145–319 (EYEEVQQYYP…FLGGNCKCAH (175 aa)) is the CRAL-TRIO domain. Residues 372-419 (DMSSPDGGHVRERESHPEHDKRAQLSNQAEAVGVGRMEQSDSTSPLPN) are disordered. The segment covering 379–394 (GHVRERESHPEHDKRA) has biased composition (basic and acidic residues). Positions 512–539 (QEKEDILRDSLDRIKSIEQDLQKTKKAL) form a coiled coil.

This sequence belongs to the SFH family.

It localises to the golgi apparatus membrane. It is found in the cell membrane. Required for transport of secretory proteins from the Golgi complex. Catalyzes the transfer of phosphatidylinositol and phosphatidylcholine between membranes in vitro. The protein is Phosphatidylinositol/phosphatidylcholine transfer protein SFH9 (SFH9) of Arabidopsis thaliana (Mouse-ear cress).